The primary structure comprises 190 residues: MKRVWVTGYRSYELNIFKDNDPKVQVIKEVLKNYLRAQLELNDDEFWVITGPQMGTERWGLEAALELQADFPQLKTALMFPFAEFGKQWNENNQLKLTSITQQVDFFANVSDKPYQSPQQLRNYQQFMLTHTDEAFLLYDPEYQGKTKYDYEIIQKYKEESEYSMTFVDFDELQEEAEEWAERQREKDEF.

Belongs to the UPF0398 family.

This is UPF0398 protein LAR_0869 from Limosilactobacillus reuteri subsp. reuteri (strain JCM 1112) (Lactobacillus reuteri).